A 93-amino-acid chain; its full sequence is Acyl carrier protein AcpXL (93 aa).

Residues 2–88 (SSTFDKVADI…NLCAKIDELV (87 aa)) form the Carrier domain. Position 37 is an O-(pantetheine 4'-phosphoryl)serine (Ser37).

4'-phosphopantetheine is transferred from CoA to a specific serine of apo-ACP by AcpS. This modification is essential for activity because fatty acids are bound in thioester linkage to the sulfhydryl of the prosthetic group.

Its subcellular location is the cytoplasm. The protein operates within glycolipid biosynthesis; KDO(2)-lipid A biosynthesis. Functionally, carrier of the growing fatty acid chain in fatty acid biosynthesis. Is involved in the transfer of long hydroxylated fatty acids to lipid A. This chain is Acyl carrier protein AcpXL (acpXL), found in Brucella melitensis biotype 1 (strain ATCC 23456 / CCUG 17765 / NCTC 10094 / 16M).